Reading from the N-terminus, the 173-residue chain is HTH-type transcriptional regulator IscR (173 aa).

The HTH rrf2-type domain occupies 2–131; it reads KLTSKGRYAV…NDITLGELMK (130 aa). Residues 28–51 constitute a DNA-binding region (H-T-H motif); the sequence is LADISERQGISLSYLEQLFSKLRK. 3 residues coordinate [2Fe-2S] cluster: C92, C98, and C104.

[2Fe-2S] cluster is required as a cofactor.

Functionally, regulates the transcription of several operons and genes involved in the biogenesis of Fe-S clusters and Fe-S-containing proteins. This Vibrio atlanticus (strain LGP32) (Vibrio splendidus (strain Mel32)) protein is HTH-type transcriptional regulator IscR.